We begin with the raw amino-acid sequence, 422 residues long: Serine protease HTRA2, mitochondrial (422 aa).

The transit peptide at 1–17 directs the protein to the mitochondrion; sequence MALRGSHRLQVILKRCI. The propeptide occupies 18–74; it reads ASPLFHSHAPNRRSSQPAIKGGEPNSNGNSGHDQQNGERKGKGWRRLVSFFVPFSLG. A disordered region spans residues 24-56; it reads SHAPNRRSSQPAIKGGEPNSNGNSGHDQQNGER. The segment covering 41-51 has biased composition (polar residues); it reads PNSNGNSGHDQ. The chain crosses the membrane as a helical span at residues 64 to 82; the sequence is LVSFFVPFSLGAVVSAAVI. 2 consecutive short sequence motifs (IAP-binding) follow at residues 75-78 and 94-97; these read AVVS and SKMT. Residues 139-302 form a serine protease region; that stretch reads SNGSGFIIEQ…IPIDYVKVFL (164 aa). Active-site charge relay system residues include histidine 157, aspartate 189, and serine 266. In terms of domain architecture, PDZ spans 325 to 410; sequence MGITMLTLTP…NLDIVILRGV (86 aa).

This sequence belongs to the peptidase S1C family. As to quaternary structure, interacts with th/DIAP1 (via BIR 2 domain).

It is found in the mitochondrion intermembrane space. The protein localises to the mitochondrion membrane. The enzyme catalyses Cleavage of non-polar aliphatic amino-acids at the P1 position, with a preference for Val, Ile and Met. At the P2 and P3 positions, Arg is selected most strongly with a secondary preference for other hydrophilic residues.. Functionally, serine protease that shows proteolytic activity against a non-specific substrate beta-casein. Promotes or induces cell death either by direct binding to and inhibition of BIRC proteins (also called inhibitor of apoptosis proteins, IAPs), leading to an increase in caspase activity, or by a BIRC inhibition-independent, caspase-independent and serine protease activity-dependent mechanism. Can antagonize antiapoptotic activity of th/Diap1 by directly inducing the degradation of th/Diap1. The chain is Serine protease HTRA2, mitochondrial from Drosophila erecta (Fruit fly).